A 1001-amino-acid polypeptide reads, in one-letter code: 26S proteasome non-ATPase regulatory subunit 1 homolog B (1001 aa).

Residue Ala2 is modified to N-acetylalanine. Lys166 participates in a covalent cross-link: Glycyl lysine isopeptide (Lys-Gly) (interchain with G-Cter in ubiquitin). PC repeat units lie at residues 412 to 447 (SATAGLGVIHRGHLQQGRSLMAPYLPQGGAGGGGSP), 452 to 485 (GALYALGLIHANHGEGIKQFLRDSLRSTSVEVIQ), 487 to 521 (GACLGLGLAALGTADEDIYDDIKSVLYTDSAVAGE), 522 to 555 (AAGISMGLLLVGTATDKASEMLAYAHETQHEKII), 557 to 590 (GLALGIALTVYGREEGADTLIEQMTRDQDPIIRY), 591 to 626 (GGMYALALAYSGTANNKAIRQLLHFAVSDVSDDVRR), 627 to 659 (TAVLALGFVLYSDPEQTPRIVSLLSESYNPHVR), 661 to 695 (GAALAVGISCAGTGLSEAISLLEPLTSDVVDFVRQ), 696 to 736 (GALI…DTMS), and 739 to 771 (GAILASGILDAGGRNVTIRLLSKTKHDKVTAVI). Disordered regions lie at residues 853 to 896 (AKKE…TVEK) and 954 to 1001 (SLTD…YASP). The segment covering 854–863 (KKEAEQKAKA) has biased composition (basic and acidic residues). At Ser889 the chain carries Phosphoserine. Low complexity predominate over residues 961-985 (STASPAVGAEAAGQAQQAATTSAMA).

Belongs to the proteasome subunit S1 family. In terms of assembly, component of the 19S regulatory particle (RP/PA700) base subcomplex of the 26S proteasome. The 26S proteasome is composed of a core protease (CP), known as the 20S proteasome, capped at one or both ends by the 19S regulatory particle (RP/PA700). The RP/PA700 complex is composed of at least 17 different subunits in two subcomplexes, the base and the lid, which form the portions proximal and distal to the 20S proteolytic core, respectively.

Functionally, acts as a regulatory subunit of the 26 proteasome which is involved in the ATP-dependent degradation of ubiquitinated proteins. This chain is 26S proteasome non-ATPase regulatory subunit 1 homolog B (RPN2B), found in Arabidopsis thaliana (Mouse-ear cress).